Here is a 719-residue protein sequence, read N- to C-terminus: Anaphase-promoting complex subunit 4 (719 aa).

One copy of the WD repeat lies at 57 to 96 (NSQRIWDVDFHDLEATELCWNHDGNLIVVGFKNGELKIID).

In terms of assembly, the APC/C is composed of at least 13 subunits: apc1, apc2, nuc2, apc4, apc5, cut9, apc8, apc10, apc11, hcn1, apc13, apc14 and apc15. Interacts with apc1 and dim1.

In terms of biological role, component of the anaphase-promoting complex/cyclosome (APC/C), a cell cycle-regulated E3 ubiquitin-protein ligase complex that controls progression through mitosis and the G1 phase of the cell cycle. The APC/C is thought to confer substrate specificity and, in the presence of ubiquitin-conjugating E2 enzymes, it catalyzes the formation of protein-ubiquitin conjugates that are subsequently degraded by the 26S proteasome. Has a role in promoting metaphase to anaphase transition via the ubiquitination of specific mitotic substrates. The protein is Anaphase-promoting complex subunit 4 (cut20) of Schizosaccharomyces pombe (strain 972 / ATCC 24843) (Fission yeast).